The following is an 81-amino-acid chain: UPF0248 protein SSO2687 (81 aa).

It belongs to the UPF0248 family.

This chain is UPF0248 protein SSO2687, found in Saccharolobus solfataricus (strain ATCC 35092 / DSM 1617 / JCM 11322 / P2) (Sulfolobus solfataricus).